Here is a 355-residue protein sequence, read N- to C-terminus: Peptide chain release factor 1 (355 aa).

The residue at position 231 (Gln231) is an N5-methylglutamine.

The protein belongs to the prokaryotic/mitochondrial release factor family. Methylated by PrmC. Methylation increases the termination efficiency of RF1.

It localises to the cytoplasm. Peptide chain release factor 1 directs the termination of translation in response to the peptide chain termination codons UAG and UAA. This is Peptide chain release factor 1 from Erythrobacter litoralis (strain HTCC2594).